The chain runs to 120 residues: Large ribosomal subunit protein bL17 (120 aa).

This sequence belongs to the bacterial ribosomal protein bL17 family. In terms of assembly, part of the 50S ribosomal subunit. Contacts protein L32.

In Bacillus cereus (strain ATCC 14579 / DSM 31 / CCUG 7414 / JCM 2152 / NBRC 15305 / NCIMB 9373 / NCTC 2599 / NRRL B-3711), this protein is Large ribosomal subunit protein bL17.